Consider the following 464-residue polypeptide: MSDLVPLSRKPAPAAGDPAPSPAAPPRKVYVHTFGCQMNESDSDRMVELLGRHAYARAASADEADLILLNTCAVREKAEQKLLSALGRYREVKARRGALIAVSGCVAQQEKDRLLARVPYVDFVFGPDNIARLPEMVERARGERFAETGWMDSEEYVFPRADAEAARGRATAFVTAMKGCDNVCAFCIVPHTRGREVSRPFPDVVAECAALAAVGVREVTLIGQNVNSYGGGCTFADLLRRVAAVPGIDRIRFTTSHPHDLSGALVEVFRDEPKVMPHFHLPVQSGSDAVLRRMRRDYSVAEYLDRFDRLRAARPGIAITTDFIVGFPGETDADFEASLALLERARFEQSFSFVFSPRPHTVAAVRLGSAPEWQDVPRDVAVARLERLLAAQRRIAGEILAAELGKVVEVLVEGPSDEPGERLGRTPENRVVHLTADEAAAPAGARVPVRITRAGGSSLSGTLA.

The interval 1–25 is disordered; that stretch reads MSDLVPLSRKPAPAAGDPAPSPAAP. The MTTase N-terminal domain maps to 27–142; it reads RKVYVHTFGC…LPEMVERARG (116 aa). 6 residues coordinate [4Fe-4S] cluster: Cys36, Cys72, Cys105, Cys180, Cys184, and Cys187. The region spanning 166–398 is the Radical SAM core domain; it reads ARGRATAFVT…LAAQRRIAGE (233 aa). Residues 401–464 enclose the TRAM domain; that stretch reads AAELGKVVEV…GGSSLSGTLA (64 aa).

Belongs to the methylthiotransferase family. MiaB subfamily. As to quaternary structure, monomer. The cofactor is [4Fe-4S] cluster.

It localises to the cytoplasm. The catalysed reaction is N(6)-dimethylallyladenosine(37) in tRNA + (sulfur carrier)-SH + AH2 + 2 S-adenosyl-L-methionine = 2-methylsulfanyl-N(6)-dimethylallyladenosine(37) in tRNA + (sulfur carrier)-H + 5'-deoxyadenosine + L-methionine + A + S-adenosyl-L-homocysteine + 2 H(+). In terms of biological role, catalyzes the methylthiolation of N6-(dimethylallyl)adenosine (i(6)A), leading to the formation of 2-methylthio-N6-(dimethylallyl)adenosine (ms(2)i(6)A) at position 37 in tRNAs that read codons beginning with uridine. The polypeptide is tRNA-2-methylthio-N(6)-dimethylallyladenosine synthase (Anaeromyxobacter dehalogenans (strain 2CP-C)).